A 266-amino-acid polypeptide reads, in one-letter code: Dioicin-2 (266 aa).

2 disulfide bridges follow: cysteine 32–cysteine 263 and cysteine 85–cysteine 102. Residue glutamate 176 is part of the active site.

Its subcellular location is the secreted. The protein localises to the extracellular space. The protein resides in the golgi apparatus. It is found in the vacuole. It catalyses the reaction Endohydrolysis of the N-glycosidic bond at one specific adenosine on the 28S rRNA.. Functionally, nicks pBR322 dsDNA. Has adenine polynucleotide glycosidase activity on herring sperm ssDNA. The polypeptide is Dioicin-2 (Phytolacca dioica (Bella sombra tree)).